The chain runs to 490 residues: Cytochrome P450 71A19 (490 aa).

A helical transmembrane segment spans residues 3-23 (IILVTLCLTTLLALLLLKSIL). Cys433 is a heme binding site.

It belongs to the cytochrome P450 family. Heme serves as cofactor.

It is found in the membrane. This Arabidopsis thaliana (Mouse-ear cress) protein is Cytochrome P450 71A19 (CYP71A19).